A 463-amino-acid polypeptide reads, in one-letter code: Formate-nitrite transporter 2 (463 aa).

Residues 1–100 (MCSIPPLRLL…VKKTQLRIDR (100 aa)) lie on the Cytoplasmic side of the membrane. A helical membrane pass occupies residues 101-121 (LLLQAFMAGIFVAMAGHCCTV). The Extracellular segment spans residues 122–142 (LAGSYPTDPGDPLAVAKPTQK). Residues 143-163 (FIYGALFPVAFICIILTGAEL) traverse the membrane as a helical segment. Residues 164 to 189 (FTGNTMTMLICYFQKRVTMLQLGVNW) lie on the Cytoplasmic side of the membrane. The helical transmembrane segment at 190 to 210 (LGSLAGNWLGALFGAYFLSYL) threads the bilayer. Residues 211–237 (TGALGDEHVRQFLFRTCVNKISYGWGE) are Extracellular-facing. Residues 238–258 (CFLRGVGCNTFVCLAVWAVIA) traverse the membrane as a helical segment. Topologically, residues 259–265 (SENVAGK) are cytoplasmic. A helical membrane pass occupies residues 266 to 286 (VLVMWFPIVAFCVGGYEHIIA). The Extracellular portion of the chain corresponds to 287-305 (NMYTLQAGLMAGAPVAILD). A helical transmembrane segment spans residues 306-326 (VIAFNFLPTLLGNIVGGCLLV). Residues 327–463 (GAVYAYNFYP…QTAESVAQQV (137 aa)) are Cytoplasmic-facing. The interval 424-463 (SGNLSTHARLDLPNRPVEPPSDGLEVTPQSQTAESVAQQV) is disordered. Positions 450-463 (TPQSQTAESVAQQV) are enriched in polar residues.

Belongs to the FNT transporter (TC 1.A.16) family. Homopentamer.

It localises to the cell membrane. It carries out the reaction (S)-lactate(in) + H(+)(in) = (S)-lactate(out) + H(+)(out). It catalyses the reaction formate(in) + H(+)(in) = formate(out) + H(+)(out). The enzyme catalyses pyruvate(out) + H(+)(out) = pyruvate(in) + H(+)(in). The catalysed reaction is acetate(out) + H(+)(out) = acetate(in) + H(+)(in). With respect to regulation, inhibited by p-chloromercuribenzene sulfonate (pCMBS). Methyl methanethiosulfonate (MMTS) inhibits L-lactate but not formate transport. Inhibited by the Malaria Box compound MMV007839. Inhibited by BH-296, BH-317, BH-326 and BH-388 compounds. Functionally, monocarboxylate-proton symporter; active in acidic-to-neutral pH range. Transports L-lactate and formate. This Toxoplasma gondii (strain ATCC 50611 / Me49) protein is Formate-nitrite transporter 2.